Reading from the N-terminus, the 158-residue chain is Phosphopantetheine adenylyltransferase (158 aa).

Residue Ser-9 coordinates substrate. Residues 9–10 (SF) and His-17 each bind ATP. Residues Lys-41, Val-73, and Lys-87 each coordinate substrate. ATP contacts are provided by residues 88–90 (GLR), Glu-98, and 122–128 (YSFVSSS).

The protein belongs to the bacterial CoaD family. Homohexamer. It depends on Mg(2+) as a cofactor.

It localises to the cytoplasm. The catalysed reaction is (R)-4'-phosphopantetheine + ATP + H(+) = 3'-dephospho-CoA + diphosphate. Its pathway is cofactor biosynthesis; coenzyme A biosynthesis; CoA from (R)-pantothenate: step 4/5. Reversibly transfers an adenylyl group from ATP to 4'-phosphopantetheine, yielding dephospho-CoA (dPCoA) and pyrophosphate. The chain is Phosphopantetheine adenylyltransferase from Mycolicibacterium smegmatis (strain ATCC 700084 / mc(2)155) (Mycobacterium smegmatis).